A 173-amino-acid polypeptide reads, in one-letter code: Ribosome maturation factor RimM (173 aa).

One can recognise a PRC barrel domain in the interval 96-169 (PDEFYDHQLE…LITIDPPDGL (74 aa)).

It belongs to the RimM family. Binds ribosomal protein uS19.

It is found in the cytoplasm. Its function is as follows. An accessory protein needed during the final step in the assembly of 30S ribosomal subunit, possibly for assembly of the head region. Essential for efficient processing of 16S rRNA. May be needed both before and after RbfA during the maturation of 16S rRNA. It has affinity for free ribosomal 30S subunits but not for 70S ribosomes. This is Ribosome maturation factor RimM from Mycolicibacterium gilvum (strain PYR-GCK) (Mycobacterium gilvum (strain PYR-GCK)).